The sequence spans 473 residues: P3 protein (473 aa).

Helical transmembrane passes span 25–45, 221–241, 249–269, 277–297, 316–336, 356–376, 381–401, 413–433, and 446–466; these read FVGM…AQVM, PMLL…FLMA, ALAL…SYLF, VTLA…FLPL, ISKI…GVVI, FILL…ILVG, IVLV…SLAI, VSIE…QLSL, and FIVA…QFIY.

It belongs to the bile acid:sodium symporter (BASS) (TC 2.A.28) family.

The protein resides in the membrane. Functionally, the ubiquitous expression and the conservation of the sequence in distant animal species suggest that the gene codes for a protein with housekeeping functions. The sequence is that of P3 protein (Slc10a3) from Mus musculus (Mouse).